We begin with the raw amino-acid sequence, 928 residues long: DNA polymerase I (928 aa).

The region spanning 1-323 is the 5'-3' exonuclease domain; sequence MVQIPENPLI…IDESPSEPAA (323 aa). In terms of domain architecture, 3'-5' exonuclease spans 324–517; it reads ALSYENYVTI…LHLKMWPELQ (194 aa). The interval 324–928 is klenow fragment; it reads ALSYENYVTI…GSGENWDQAH (605 aa). The polymerase stretch occupies residues 521–928; the sequence is GPLNVFENIE…GSGENWDQAH (408 aa).

It belongs to the DNA polymerase type-A family. Single-chain monomer with multiple functions.

It carries out the reaction DNA(n) + a 2'-deoxyribonucleoside 5'-triphosphate = DNA(n+1) + diphosphate. In terms of biological role, in addition to polymerase activity, this DNA polymerase exhibits 3'-5' and 5'-3' exonuclease activity. It is able to utilize nicked circular duplex DNA as a template and can unwind the parental DNA strand from its template. The chain is DNA polymerase I (polA) from Salmonella typhimurium (strain LT2 / SGSC1412 / ATCC 700720).